The following is a 256-amino-acid chain: uncharacterized protein (256 aa).

A signal peptide spans 1 to 24; that stretch reads MIKRVNKLVLGISLLFLVISITAG. C25 carries the N-palmitoyl cysteine lipid modification. C25 is lipidated: S-diacylglycerol cysteine.

The protein belongs to the staphylococcal tandem lipoprotein family.

The protein localises to the cell membrane. This is an uncharacterized protein from Staphylococcus aureus.